A 381-amino-acid polypeptide reads, in one-letter code: Cytochrome b (381 aa).

Transmembrane regions (helical) follow at residues 38 to 58 (FGSL…FLAM), 82 to 103 (WLLR…YFHI), 118 to 138 (WMTG…GYVL), and 183 to 203 (FFTF…IHLL). The heme b site is built by His-88 and His-102. Residues His-187 and His-201 each contribute to the heme b site. Residue His-206 participates in a ubiquinone binding. Helical transmembrane passes span 231–251 (IKDT…SLTS), 293–313 (LGGV…PFTF), 325–345 (VAQP…WIGA), and 352–372 (YNFL…FTPI).

Belongs to the cytochrome b family. The main subunits of complex b-c1 are: cytochrome b, cytochrome c1 and the Rieske protein. It depends on heme b as a cofactor.

It is found in the mitochondrion inner membrane. Functionally, component of the ubiquinol-cytochrome c reductase complex (complex III or cytochrome b-c1 complex) that is part of the mitochondrial respiratory chain. The b-c1 complex mediates electron transfer from ubiquinol to cytochrome c. Contributes to the generation of a proton gradient across the mitochondrial membrane that is then used for ATP synthesis. The polypeptide is Cytochrome b (MT-CYB) (Artemia franciscana (Brine shrimp)).